Reading from the N-terminus, the 765-residue chain is Glucosamine inositolphosphorylceramide transferase 1 (765 aa).

The next 3 membrane-spanning stretches (helical) occupy residues 43 to 63, 394 to 414, and 476 to 496; these read FFASCFGFYAFVAATYAWFVF, VILGYASLAAAISVVILLGFL, and MGKFTLGVIVILGLLLTCVGV. Residues Asn553, 577–582, 598–600, Arg628, and 683–687 each bind substrate; these read NSLNNR, DDD, and FNCED. Position 600 (Asp600) interacts with Mn(2+). The cysteines at positions 685 and 738 are disulfide-linked. Residue Asp687 is part of the active site.

The protein belongs to the glycosyltransferase 64 family. It depends on Mn(2+) as a cofactor. In terms of tissue distribution, specifically and highly expressed in developing embryos and mature seeds. Also detected at low levels in stigma and pollen.

It is found in the membrane. The catalysed reaction is an N-(2R-hydroxy-very-long-chain fatty acyl)-(R)-4-hydroxysphingoid base + a 1,2-diacyl-sn-glycero-3-phospho-(1D-myo-inositol) = a 1D-myo-inositol-1-phospho-N-[(R)-2-hydroxy-very-long-chain fatty acyl]-(R)-4-hydroxysphingoid base + a 1,2-diacyl-sn-glycerol. Its pathway is sphingolipid metabolism. Functionally, glycosyltransferase that mediates the glycosylation of glycosylinositol phosphorylceramides (GIPCs), the major sphingolipids in the plasma membrane; acts as a HexN(Ac)-specific GIPC sugar transferase and accepts glucosamine (GlcN) and N-acetylglucosamine (GlcNAc) as the sugar unit. Responsible for the glycosylation of a subgroup of GIPCs found in seeds and pollen that contain GlcNAc and GlcN (GlcN(Ac)). Maybe involved in the maintenance of cell-cell adhesion. In Arabidopsis thaliana (Mouse-ear cress), this protein is Glucosamine inositolphosphorylceramide transferase 1.